A 171-amino-acid polypeptide reads, in one-letter code: 3-hydroxydecanoyl-[acyl-carrier-protein] dehydratase (171 aa).

The active site involves His70.

The protein belongs to the thioester dehydratase family. FabA subfamily. Homodimer.

The protein resides in the cytoplasm. The enzyme catalyses a (3R)-hydroxyacyl-[ACP] = a (2E)-enoyl-[ACP] + H2O. The catalysed reaction is (3R)-hydroxydecanoyl-[ACP] = (2E)-decenoyl-[ACP] + H2O. It carries out the reaction (2E)-decenoyl-[ACP] = (3Z)-decenoyl-[ACP]. The protein operates within lipid metabolism; fatty acid biosynthesis. Functionally, necessary for the introduction of cis unsaturation into fatty acids. Catalyzes the dehydration of (3R)-3-hydroxydecanoyl-ACP to E-(2)-decenoyl-ACP and then its isomerization to Z-(3)-decenoyl-ACP. Can catalyze the dehydratase reaction for beta-hydroxyacyl-ACPs with saturated chain lengths up to 16:0, being most active on intermediate chain length. The polypeptide is 3-hydroxydecanoyl-[acyl-carrier-protein] dehydratase (Shewanella sp. (strain ANA-3)).